Reading from the N-terminus, the 339-residue chain is MLNDRARILLKTLVERYISEGEPVGSRTLSKHAGLDLSPASIRNIMSDLEEMGFVASPHTSAGRVPTPRGYRFFVDTLLTVRPLDQVSVNHLENSLAASDPQRLMTAASTLLSDLSQFAGLVMTPRRNPAFRQIEFLTLSDKRVLLIIVTMEGEVENRVIVTEQSYSAAALTEAANYFNQNFAGHSFDHVRSKLRDELGRMRDDITRLMAAAVDAGTQALDASQDNVVVSGSRKLLDVEELSSNMRSLRRLFDAFEKKTGLLQLLDQSRSAAGVQIFIGGESELLPLDECSLVTAPYSVDGVVVGTLGVVGPTRMAYERVVPIVDVTAKILSSALSQHK.

This sequence belongs to the HrcA family.

Functionally, negative regulator of class I heat shock genes (grpE-dnaK-dnaJ and groELS operons). Prevents heat-shock induction of these operons. The polypeptide is Heat-inducible transcription repressor HrcA (Thiobacillus denitrificans (strain ATCC 25259 / T1)).